The following is a 283-amino-acid chain: Co-chaperone protein DjlA (283 aa).

The Periplasmic portion of the chain corresponds to 1–6 (MQIFGK). A helical transmembrane segment spans residues 7–30 (ILGGFFGFLFGGFFGAALGIFIGH). At 31–283 (QFDKAKRMAN…DLIKKEKGIK (253 aa)) the chain is on the cytoplasmic side. A compositionally biased stretch (gly residues) spans 188–197 (QGGGFSGHQS). Positions 188–210 (QGGGFSGHQSGGSHQQGQWQQAS) are disordered. Over residues 198 to 210 (GGSHQQGQWQQAS) the composition is skewed to low complexity. The region spanning 217–283 (DAYNLLGISE…DLIKKEKGIK (67 aa)) is the J domain.

In terms of assembly, homodimer.

It is found in the cell inner membrane. Its function is as follows. Regulatory DnaK co-chaperone. Direct interaction between DnaK and DjlA is needed for the induction of the wcaABCDE operon, involved in the synthesis of a colanic acid polysaccharide capsule, possibly through activation of the RcsB/RcsC phosphotransfer signaling pathway. The colanic acid capsule may help the bacterium survive conditions outside the host. This is Co-chaperone protein DjlA from Aliivibrio fischeri (strain ATCC 700601 / ES114) (Vibrio fischeri).